A 224-amino-acid chain; its full sequence is Deoxyribose-phosphate aldolase (224 aa).

The active-site Proton donor/acceptor is the D92. The active-site Schiff-base intermediate with acetaldehyde is the K154. Catalysis depends on K183, which acts as the Proton donor/acceptor.

The protein belongs to the DeoC/FbaB aldolase family. DeoC type 1 subfamily.

Its subcellular location is the cytoplasm. It catalyses the reaction 2-deoxy-D-ribose 5-phosphate = D-glyceraldehyde 3-phosphate + acetaldehyde. The protein operates within carbohydrate degradation; 2-deoxy-D-ribose 1-phosphate degradation; D-glyceraldehyde 3-phosphate and acetaldehyde from 2-deoxy-alpha-D-ribose 1-phosphate: step 2/2. Its function is as follows. Catalyzes a reversible aldol reaction between acetaldehyde and D-glyceraldehyde 3-phosphate to generate 2-deoxy-D-ribose 5-phosphate. This Histophilus somni (strain 129Pt) (Haemophilus somnus) protein is Deoxyribose-phosphate aldolase.